The primary structure comprises 268 residues: MRLIIRPTYEDISKWAANHVAQKIKEFSPTREKPFILGLPTGSSPIGMYKNLIKLYKDEKISFQNVITFNMDEYIGIEKNHPESYHSFMWKNFFSHIDIKKENINILNGNALNLKKECEEYEKKIKSFGGIMLFVGGIGPDGHIAFNEPGSSLTSRTRIKTLTQDTIIANSRFFEGNVNKVPKSALTVGVGTIMDSQEILIIVNGHNKARALKHAIEKGVNHMWTISALQLHKNTIIVSDKKATYELKIGTVEYFNDIERENFNNDLK.

Catalysis depends on aspartate 72, which acts as the Proton acceptor; for enolization step. Aspartate 141 (for ring-opening step) is an active-site residue. Histidine 143 serves as the catalytic Proton acceptor; for ring-opening step. The active-site For ring-opening step is glutamate 148.

This sequence belongs to the glucosamine/galactosamine-6-phosphate isomerase family. NagB subfamily.

The catalysed reaction is alpha-D-glucosamine 6-phosphate + H2O = beta-D-fructose 6-phosphate + NH4(+). The protein operates within amino-sugar metabolism; N-acetylneuraminate degradation; D-fructose 6-phosphate from N-acetylneuraminate: step 5/5. With respect to regulation, allosterically activated by N-acetylglucosamine 6-phosphate (GlcNAc6P). Its function is as follows. Catalyzes the reversible isomerization-deamination of glucosamine 6-phosphate (GlcN6P) to form fructose 6-phosphate (Fru6P) and ammonium ion. This chain is Glucosamine-6-phosphate deaminase, found in Borrelia garinii subsp. bavariensis (strain ATCC BAA-2496 / DSM 23469 / PBi) (Borreliella bavariensis).